The sequence spans 963 residues: Copalyl diphosphate synthase (963 aa).

The interval 1–539 (MSPMDLQESA…EAYILAALKR (539 aa)) is type II terpene cyclase (TC). Residues 227-292 (ATQWDDECED…FIEKIRSYLH (66 aa)) form a substrate binding region. Positions 311 and 314 each coordinate Mg(2+). The short motif at 311–314 (DADD) is the DXDD element. The NSE/DTE signature appears at 333–341 (AMLKEFEEE). Substrate contacts are provided by residues 337–341 (EFEEE) and 521–522 (VT). Residues 540–659 (AADLPDENAE…SVSVHTDHSD (120 aa)) form a linker region. A compositionally biased stretch (polar residues) spans 627–648 (TNGHYVNGTNHETPLTNGISNG). The disordered stretch occupies residues 627–657 (TNGHYVNGTNHETPLTNGISNGDSVSVHTDH). The tract at residues 660-963 (SYYQRSDWTA…KILARMSLEL (304 aa)) is geranylfarnesyl diphosphate synthase (PT). The isopentenyl diphosphate site is built by K688, R691, and H720. The Mg(2+) site is built by D727 and D731. The DDXXD 1 signature appears at 727–731 (DDIQD). R736 contributes to the dimethylallyl diphosphate binding site. R737 contributes to the isopentenyl diphosphate binding site. 6 residues coordinate dimethylallyl diphosphate: K814, T815, Q848, N855, K865, and K875. A DDXXD 2 motif is present at residues 851–855 (DDYLN).

This sequence in the N-terminal section; belongs to the terpene synthase family. In the C-terminal section; belongs to the FPP/GGPP synthase family. As to quaternary structure, homohexamer. Mg(2+) is required as a cofactor.

The enzyme catalyses isopentenyl diphosphate + (2E,6E)-farnesyl diphosphate = (2E,6E,10E)-geranylgeranyl diphosphate + diphosphate. The catalysed reaction is (2E,6E,10E)-geranylgeranyl diphosphate = (+)-copalyl diphosphate. Its function is as follows. Bifunctional terpene synthase that possesses both prenyltransferase and type II terpene cyclase activity, converting isopentenyl diphosphate (IPP) and dimethylallyl diphosphate (DMAPP) into geranylgeranyl diphosphate (GGPP) and further converting GGPP into copalyl diphosphate, respectively. The polypeptide is Copalyl diphosphate synthase (Talaromyces verruculosus (Penicillium verruculosum)).